Consider the following 124-residue polypeptide: uncharacterized protein (124 aa).

This is an uncharacterized protein from Saccharomyces cerevisiae (strain ATCC 204508 / S288c) (Baker's yeast).